We begin with the raw amino-acid sequence, 236 residues long: Phosphoribosylaminoimidazole-succinocarboxamide synthase (236 aa).

This sequence belongs to the SAICAR synthetase family.

It catalyses the reaction 5-amino-1-(5-phospho-D-ribosyl)imidazole-4-carboxylate + L-aspartate + ATP = (2S)-2-[5-amino-1-(5-phospho-beta-D-ribosyl)imidazole-4-carboxamido]succinate + ADP + phosphate + 2 H(+). Its pathway is purine metabolism; IMP biosynthesis via de novo pathway; 5-amino-1-(5-phospho-D-ribosyl)imidazole-4-carboxamide from 5-amino-1-(5-phospho-D-ribosyl)imidazole-4-carboxylate: step 1/2. This is Phosphoribosylaminoimidazole-succinocarboxamide synthase from Chlorobium phaeobacteroides (strain DSM 266 / SMG 266 / 2430).